Consider the following 471-residue polypeptide: Adenosylhomocysteinase (471 aa).

Thr-60, Asp-135, and Glu-196 together coordinate substrate. Residue 197-199 (TTT) participates in NAD(+) binding. Positions 226 and 230 each coordinate substrate. NAD(+) contacts are provided by residues Asn-231, 260-265 (GYGDVG), Glu-283, Asn-318, 339-341 (IGH), and Asn-387.

The protein belongs to the adenosylhomocysteinase family. NAD(+) is required as a cofactor.

The protein localises to the cytoplasm. It catalyses the reaction S-adenosyl-L-homocysteine + H2O = L-homocysteine + adenosine. It functions in the pathway amino-acid biosynthesis; L-homocysteine biosynthesis; L-homocysteine from S-adenosyl-L-homocysteine: step 1/1. Its function is as follows. May play a key role in the regulation of the intracellular concentration of adenosylhomocysteine. This is Adenosylhomocysteinase from Chlorobium phaeobacteroides (strain DSM 266 / SMG 266 / 2430).